A 290-amino-acid chain; its full sequence is UPF0761 membrane protein YihY (290 aa).

6 helical membrane-spanning segments follow: residues 44–64 (LLSLVPLVAVVFALFAAFPMF), 104–124 (VGACGLIVTALLLMYSIDSAL), 140–160 (FAVYWMILTLGPLLAGASLAI), 183–203 (IFPLLLSWISFWLLYSIVPTI), 210–230 (AIVGAFVAALLFEAGKKGFAL), and 244–264 (VLAVIPILFVWVYWTWCIVLL).

Belongs to the UPF0761 family.

It is found in the cell inner membrane. This is UPF0761 membrane protein YihY from Escherichia coli O139:H28 (strain E24377A / ETEC).